The following is a 477-amino-acid chain: Leukotoxin export protein LtxD (477 aa).

Residues 64 to 84 (IMLFLTLAIIVSIFSNVEIIA) traverse the membrane as a helical segment. A coiled-coil region spans residues 206–287 (LNLNKKEAEK…ENEVLLAKEE (82 aa)).

This sequence belongs to the membrane fusion protein (MFP) (TC 8.A.1) family. Probably part of a complex composed of LtxB, LtxD and TdeA, which forms a single transport channel across the two membranes.

The protein resides in the cell inner membrane. Its function is as follows. Involved in the export of the LtxA leukotoxin. This chain is Leukotoxin export protein LtxD, found in Aggregatibacter actinomycetemcomitans (Actinobacillus actinomycetemcomitans).